We begin with the raw amino-acid sequence, 83 residues long: Large ribosomal subunit protein eL31 (83 aa).

The protein belongs to the eukaryotic ribosomal protein eL31 family.

The polypeptide is Large ribosomal subunit protein eL31 (Methanococcus aeolicus (strain ATCC BAA-1280 / DSM 17508 / OCM 812 / Nankai-3)).